Reading from the N-terminus, the 210-residue chain is MIEGLLGRKIGMTQVFDATGQVIPVTIIEVGPCVVTQIRTKERDGYEAVQIGYQEVKAKSLTRPEQGHLRGAGKLLRHLREFRADNIADHKVGDVLTVEMFTPGQRVDVIGTSKGRGFQGVVKRHGFGGGPRTHGQSDRLRAPGSIGAGTDPGHVLKNTRMAGRMGNQRVTVQNLTVVDVVPERNLLLVRGSIPGAKNGLVMVRRAIKGS.

Residues 125 to 151 (HGFGGGPRTHGQSDRLRAPGSIGAGTD) are disordered.

This sequence belongs to the universal ribosomal protein uL3 family. Part of the 50S ribosomal subunit. Forms a cluster with proteins L14 and L19.

In terms of biological role, one of the primary rRNA binding proteins, it binds directly near the 3'-end of the 23S rRNA, where it nucleates assembly of the 50S subunit. This is Large ribosomal subunit protein uL3 from Roseiflexus sp. (strain RS-1).